A 305-amino-acid chain; its full sequence is tRNA pseudouridine synthase B (305 aa).

Asp-39 serves as the catalytic Nucleophile.

This sequence belongs to the pseudouridine synthase TruB family. Type 1 subfamily.

It carries out the reaction uridine(55) in tRNA = pseudouridine(55) in tRNA. Responsible for synthesis of pseudouridine from uracil-55 in the psi GC loop of transfer RNAs. This chain is tRNA pseudouridine synthase B, found in Staphylococcus aureus (strain Mu50 / ATCC 700699).